The primary structure comprises 314 residues: Ribose-phosphate pyrophosphokinase (314 aa).

Residues 37–39 and 96–97 each bind ATP; these read DGE and RQ. Residues His131 and Asp170 each coordinate Mg(2+). Lys194 is an active-site residue. Residues Arg196, Asp220, and 224–228 contribute to the D-ribose 5-phosphate site; that span reads DTGGT.

This sequence belongs to the ribose-phosphate pyrophosphokinase family. Class I subfamily. Homohexamer. Requires Mg(2+) as cofactor.

Its subcellular location is the cytoplasm. The catalysed reaction is D-ribose 5-phosphate + ATP = 5-phospho-alpha-D-ribose 1-diphosphate + AMP + H(+). Its pathway is metabolic intermediate biosynthesis; 5-phospho-alpha-D-ribose 1-diphosphate biosynthesis; 5-phospho-alpha-D-ribose 1-diphosphate from D-ribose 5-phosphate (route I): step 1/1. Involved in the biosynthesis of the central metabolite phospho-alpha-D-ribosyl-1-pyrophosphate (PRPP) via the transfer of pyrophosphoryl group from ATP to 1-hydroxyl of ribose-5-phosphate (Rib-5-P). This chain is Ribose-phosphate pyrophosphokinase, found in Vibrio cholerae serotype O1 (strain ATCC 39315 / El Tor Inaba N16961).